A 240-amino-acid polypeptide reads, in one-letter code: tRNA (guanine-N(1)-)-methyltransferase (240 aa).

Residues Gly110 and 129 to 134 contribute to the S-adenosyl-L-methionine site; that span reads LGDFVL.

The protein belongs to the RNA methyltransferase TrmD family. In terms of assembly, homodimer.

It localises to the cytoplasm. The enzyme catalyses guanosine(37) in tRNA + S-adenosyl-L-methionine = N(1)-methylguanosine(37) in tRNA + S-adenosyl-L-homocysteine + H(+). Specifically methylates guanosine-37 in various tRNAs. This Clostridium botulinum (strain Loch Maree / Type A3) protein is tRNA (guanine-N(1)-)-methyltransferase.